The following is a 330-amino-acid chain: tRNA U34 carboxymethyltransferase (330 aa).

Carboxy-S-adenosyl-L-methionine-binding positions include Lys91, Trp105, Lys110, Gly130, 152 to 154 (DPS), 181 to 182 (IE), Met196, Tyr200, and Arg315.

The protein belongs to the class I-like SAM-binding methyltransferase superfamily. CmoB family. As to quaternary structure, homotetramer.

The enzyme catalyses carboxy-S-adenosyl-L-methionine + 5-hydroxyuridine(34) in tRNA = 5-carboxymethoxyuridine(34) in tRNA + S-adenosyl-L-homocysteine + H(+). Its function is as follows. Catalyzes carboxymethyl transfer from carboxy-S-adenosyl-L-methionine (Cx-SAM) to 5-hydroxyuridine (ho5U) to form 5-carboxymethoxyuridine (cmo5U) at position 34 in tRNAs. The polypeptide is tRNA U34 carboxymethyltransferase (Shewanella woodyi (strain ATCC 51908 / MS32)).